The sequence spans 1628 residues: MDGKEKKSGSKRGSKVFQFDDDADDDEPIGSLLEIMKHKSSKKDKVETESTGKQRQKQVVEKKLSALGKDSEDMDDTLASFRKRLKGNKKGVESGTSRVRNHEGVDTVTNSNLKPIEEANKNEVQSVLLRENGASNSIQKCASETGTLLHKFSGKDKAASPSHEKVETVSSEKEADVFHQITKEESEIPMSEKAVELSRVSVPMPDVHGEVNCTIAPDKHIHLGEPTSESGYYREKNLVMCDCGTQFNFEDRSFESNTQVTLCQKCKYSSHHNASNGGGIQVNTLEDGTAQASPVSIIPCEDENFRGDAISLPNSGKPSTLQRPERIAKKRKLGNMVYEGDVKWENEQGFLDCQSDKSFKGSDKCGFVPSISKEIEIGRAAAVTAGLKAQSVSPIEKIILKEVLKRKGSNQEYLVCRNSILGLWSKNVSRILPVTECGVTGGPSESELPSASLIREVYKFLDQRGYINAGISSVNGKAASSTNQDYDLLQGRQLEESSMASVADSEEGVAFILGQVKAVESTSEGKKCALQNDERDLVGCATSEMLESISKKCEASIIDDNKRSVSMNALQDSTASNVEKHPETFSVAKPALSSTLSSAHSNQMRGRDCVPCEVIDEKKVIVIGAGPAGLTAARHLQRQGFSVTVLEARSRVGGRVFTDRSSLSVPVDLGASIITGIEADVPSERMPDPSVLVCNQLGLELSVLHGFCPLYDTVTGKKVPAELDDALQAEFNSLIDDVDLLVEEIGKERANKMSLEDGLEYGLQRLRMPHDKVNIDKFGLLNSSSKTGIRGPFMQDESWKDDFLNPLERRVMNWHFAHTEYGCAAVLKEVSLPHWNQDEFYGGFGGPHAMIKGGYSRVVESLAEGLDIHLNKIVSDVSYVSDVSAMDNSKHKVRVSTSNGCEYLGDAVLVTVPLGCLKAETIKFSPPLPDWKYASIKQLGFGVLNKVVLEFPTVFWDDSVDYFGATAEETDLRGECFMFWNVKKTVGAPVLIALVVGKAAFEYTNKSKSEHVNHAMMVLRKLFGGDLVPDPVASVVTDWGTDPYSYGAYSYVAIGASGEDYDVLGRPVQNCLFFAGEATCKEHPDTVGGAMMTGVREAVRIIDILRSGNDYTAEIETLEKAQRKSVPVRDEVRDLIKRLEVVELSNVLARQSLLRNMFFSAKTTVGRLHLAKELLNLPGETLKSFAGTKEGLAVLNSWILDSMGKNGTQLLRHCVHILVRVTSDLFALRLSGIGKTVKEKVCAHTSRDIRAIASQLVNVWLDLYRKEKANSGKKSLRQANTTNTSRIRRKLNSPDTDSKGKLSNGNDVKTDEEFEDNQLPMSEEEKAVFAEAEAARAAAEAAAKAFSEAYHNTSLQLPKIPSFHKFARREQYAKMDESDFRKKFPGNVLGRQDCMSEIDSRNCKVRDWYDFPASCLDLDSARIPVDNYSQPSHSNELVSHSKFRECSGESVAADTSFLTGAWVDTGGSSDGFKDSQAIDRWQSQAAAADPEFFNRTLHIKDEEDSIACSTGPPSWKHDQRANECSVSQVTVNKEPHKNHIRSADRLKQGVVDFVASLLMAPYRAKKIDRDVYKSIMKKTATKVMQHTTDVEKAMAVTQFLDSKRKNKIRDFVDKQVDKYMVIPQVPKP.

The segment at 1–71 is disordered; that stretch reads MDGKEKKSGS…KKLSALGKDS (71 aa). Positions 19 to 28 are enriched in acidic residues; the sequence is FDDDADDDEP. The segment covering 43-64 has biased composition (basic and acidic residues); sequence KDKVETESTGKQRQKQVVEKKL. The SWIRM domain occupies 378 to 478; that stretch reads GRAAAVTAGL…AGISSVNGKA (101 aa). FAD-binding residues include Glu647, Arg649, Arg655, and Glu1077. The disordered stretch occupies residues 1271 to 1317; sequence SGKKSLRQANTTNTSRIRRKLNSPDTDSKGKLSNGNDVKTDEEFEDN.

It belongs to the flavin monoamine oxidase family. FAD is required as a cofactor.

Its function is as follows. Probable histone demethylase that reduces the levels of histone H3 'Lys-4' methylation in chromatin. The protein is Lysine-specific histone demethylase 1 homolog 3 (LDL3) of Arabidopsis thaliana (Mouse-ear cress).